A 185-amino-acid polypeptide reads, in one-letter code: MGKYAKNARNPAKSCRARGSNLRVHFKNTRETAKTIKRMPLRRAIQFLKNVQDKQECVPFRRFNGGVGRCAQAKQWGTTQGRWPIKSAQFLLELLRNAESNAEFKGLDSDRLFIEHIQVNRAPCLRRRTYRAHGRINPYMSSPCHIEVILTEKQKYVGKVSHDDSQKKKVSKKKLARQKEKMMRE.

The disordered stretch occupies residues 160–185 (VSHDDSQKKKVSKKKLARQKEKMMRE).

This sequence belongs to the universal ribosomal protein uL22 family.

The polypeptide is Large ribosomal subunit protein uL22 (RpL17) (Maconellicoccus hirsutus (Pink hibiscus mealybug)).